Here is a 469-residue protein sequence, read N- to C-terminus: MLSILLSLLSLSGTHAAPISKDNGTVCYALNSSTTDESIFPLLNGQGPHYDYPQSFGIPVEVPDQCTVEHVQMLARHGERYPTASKGKLMIALWDKLKEFQGQYNGPMEVFNDYEFFVSNTKYFDQLTNSTDVDPSNPYAGAKTAQHLGKYIAYNYGDLFSDSNPVFTSSSGRVHQTAKYVVSSLEEELDIQLDLQIIQENETSGANSLTPADSCMTYNGDLGDEYFENATLPYLTDIKNRWMKKNSNLNLTLEHDDIELLVDWCAFETNVKGSSAVCDLFERNDLVAYSYYANVNNFYRRGAGNPMSNPIGSVLVNASYNLLTQADELDNKVWLSFSHDTDIQQFISALGLIDNGVTEYSLDQVDFQNIQQLSWVTPMGGRIFTEKLKCGNASYVRYIINDVIIPVPGCTSGPGFSCPIEDFDDYITNRLNGIDYVSSCEVQQVSNTTELTFYWDYNEVEYNGPVSNK.

The N-terminal stretch at 1–16 (MLSILLSLLSLSGTHA) is a signal peptide. 2 N-linked (GlcNAc...) asparagine glycosylation sites follow: Asn-23 and Asn-31. His-77 acts as the Nucleophile in catalysis. N-linked (GlcNAc...) asparagine glycosylation is found at Asn-129, Asn-201, Asn-229, Asn-250, and Asn-317. Residue Asp-340 is the Proton donor of the active site. N-linked (GlcNAc...) asparagine glycans are attached at residues Asn-392 and Asn-447.

Belongs to the histidine acid phosphatase family. Glycosylated during secretion across the membrane.

The protein resides in the secreted. It carries out the reaction a phosphate monoester + H2O = an alcohol + phosphate. The sequence is that of Repressible acid phosphatase (PHO5) from Kluyveromyces lactis (strain ATCC 8585 / CBS 2359 / DSM 70799 / NBRC 1267 / NRRL Y-1140 / WM37) (Yeast).